The following is a 260-amino-acid chain: Aspartate/glutamate leucyltransferase (260 aa).

The protein belongs to the R-transferase family. Bpt subfamily.

The protein resides in the cytoplasm. It catalyses the reaction N-terminal L-glutamyl-[protein] + L-leucyl-tRNA(Leu) = N-terminal L-leucyl-L-glutamyl-[protein] + tRNA(Leu) + H(+). The catalysed reaction is N-terminal L-aspartyl-[protein] + L-leucyl-tRNA(Leu) = N-terminal L-leucyl-L-aspartyl-[protein] + tRNA(Leu) + H(+). Functions in the N-end rule pathway of protein degradation where it conjugates Leu from its aminoacyl-tRNA to the N-termini of proteins containing an N-terminal aspartate or glutamate. In Sphingomonas elodea, this protein is Aspartate/glutamate leucyltransferase.